The primary structure comprises 270 residues: 4-hydroxy-tetrahydrodipicolinate reductase (270 aa).

NAD(+)-binding positions include 8–13 (GALGRM), D34, 102–104 (GTT), and 128–131 (SQNY). H160 (proton donor/acceptor) is an active-site residue. Residue H161 participates in (S)-2,3,4,5-tetrahydrodipicolinate binding. The active-site Proton donor is K164. 170 to 171 (GT) contacts (S)-2,3,4,5-tetrahydrodipicolinate.

The protein belongs to the DapB family.

It localises to the cytoplasm. The catalysed reaction is (S)-2,3,4,5-tetrahydrodipicolinate + NAD(+) + H2O = (2S,4S)-4-hydroxy-2,3,4,5-tetrahydrodipicolinate + NADH + H(+). The enzyme catalyses (S)-2,3,4,5-tetrahydrodipicolinate + NADP(+) + H2O = (2S,4S)-4-hydroxy-2,3,4,5-tetrahydrodipicolinate + NADPH + H(+). The protein operates within amino-acid biosynthesis; L-lysine biosynthesis via DAP pathway; (S)-tetrahydrodipicolinate from L-aspartate: step 4/4. Catalyzes the conversion of 4-hydroxy-tetrahydrodipicolinate (HTPA) to tetrahydrodipicolinate. The polypeptide is 4-hydroxy-tetrahydrodipicolinate reductase (Methanococcus maripaludis (strain C6 / ATCC BAA-1332)).